Here is a 369-residue protein sequence, read N- to C-terminus: Protein HGH1 homolog (369 aa).

The protein belongs to the HGH1 family.

The protein is Protein HGH1 homolog of Drosophila melanogaster (Fruit fly).